The chain runs to 375 residues: Trichodiene synthase (375 aa).

It belongs to the trichodiene synthase family.

The enzyme catalyses (2E,6E)-farnesyl diphosphate = trichodiene + diphosphate. It participates in sesquiterpene biosynthesis; trichothecene biosynthesis. Functionally, TS is a member of the terpene cyclase group of enzymes. It catalyzes the isomerization and cyclization of farnesyl pyro-phosphate to form trichodiene, the first cyclic intermediate in the biosynthetic pathway for trichothecenes. It serves to branch trichothecene biosynthesis from the isoprenoid pathway. The chain is Trichodiene synthase (TRI5) from Fusarium asiaticum.